Reading from the N-terminus, the 310-residue chain is Probable metallo-hydrolase Mb2322c (310 aa).

Residues 1-29 (MVATRGRPCPTNFSRPQRPRVAGNGTKSQ) form a disordered region. Residues His-137, Asp-139, Asp-141, His-142, His-221, Asp-242, and His-288 each coordinate Zn(2+).

Belongs to the metallo-beta-lactamase superfamily. It depends on Zn(2+) as a cofactor.

This chain is Probable metallo-hydrolase Mb2322c, found in Mycobacterium bovis (strain ATCC BAA-935 / AF2122/97).